Here is a 429-residue protein sequence, read N- to C-terminus: Protein cereblon (429 aa).

The disordered stretch occupies residues methionine 1–lysine 30. A compositionally biased stretch (acidic residues) spans glutamate 11–aspartate 22. Serine 12 is modified (phosphoserine). Positions isoleucine 68–threonine 306 constitute a Lon N-terminal domain. In terms of domain architecture, CULT spans cysteine 305 to isoleucine 413. Zn(2+) contacts are provided by cysteine 310 and cysteine 313. (S)-thalidomide-binding residues include histidine 365, tryptophan 367, and tryptophan 373. Zn(2+)-binding residues include cysteine 378 and cysteine 381.

It belongs to the CRBN family. Component of a DCX (DDB1-CUL4-X-box) protein ligase complex, at least composed of CRBN, CUL4A, DDB1 and RBX1. Interacts directly with DDB1. Interacts with KCNT1. Interacts with ILF2. Interacts with TRAF6 and ECSIT. In terms of processing, ubiquitinated, ubiquitination is mediated by its own DCX protein ligase complex.

Its subcellular location is the cytoplasm. It localises to the nucleus. The protein resides in the membrane. It participates in protein modification; protein ubiquitination. In terms of biological role, substrate recognition component of a DCX (DDB1-CUL4-X-box) E3 protein ligase complex that mediates the ubiquitination and subsequent proteasomal degradation of target proteins, such as MEIS2, ILF2 or GLUL. Normal degradation of key regulatory proteins is required for normal limb outgrowth and expression of the fibroblast growth factor FGF8. Maintains presynaptic glutamate release and consequently cognitive functions, such as memory and learning, by negatively regulating large-conductance calcium-activated potassium (BK) channels in excitatory neurons. Likely to function by regulating the assembly and neuronal surface expression of BK channels via its interaction with KCNT1. May also be involved in regulating anxiety-like behaviors via a BK channel-independent mechanism. Plays a negative role in TLR4 signaling by interacting with TRAF6 and ECSIT, leading to inhibition of ECSIT ubiquitination, an important step of the signaling. The sequence is that of Protein cereblon (CRBN) from Pongo abelii (Sumatran orangutan).